Consider the following 290-residue polypeptide: Ribosomal RNA small subunit methyltransferase A (290 aa).

Asparagine 27, leucine 29, glycine 54, glutamate 75, aspartate 100, and asparagine 125 together coordinate S-adenosyl-L-methionine.

This sequence belongs to the class I-like SAM-binding methyltransferase superfamily. rRNA adenine N(6)-methyltransferase family. RsmA subfamily.

Its subcellular location is the cytoplasm. The enzyme catalyses adenosine(1518)/adenosine(1519) in 16S rRNA + 4 S-adenosyl-L-methionine = N(6)-dimethyladenosine(1518)/N(6)-dimethyladenosine(1519) in 16S rRNA + 4 S-adenosyl-L-homocysteine + 4 H(+). Specifically dimethylates two adjacent adenosines (A1518 and A1519) in the loop of a conserved hairpin near the 3'-end of 16S rRNA in the 30S particle. May play a critical role in biogenesis of 30S subunits. In Streptococcus pneumoniae (strain ATCC BAA-255 / R6), this protein is Ribosomal RNA small subunit methyltransferase A.